The following is a 294-amino-acid chain: ADP-ribosyl-[dinitrogen reductase] glycohydrolase (294 aa).

ADP-D-ribose-binding positions include 100-102 (NTC), E121, H158, and Y212. Mn(2+) is bound by residues D243, D245, and T246.

It belongs to the ADP-ribosylglycohydrolase family. As to quaternary structure, monomer. It depends on Mn(2+) as a cofactor.

It localises to the cytoplasm. It carries out the reaction N(omega)-alpha-(ADP-D-ribosyl)-L-arginyl-[dinitrogen reductase] + H2O = L-arginyl-[dinitrogen reductase] + ADP-D-ribose. Functionally, involved in the regulation of nitrogen fixation activity by the reversible ADP-ribosylation of one subunit of the homodimeric dinitrogenase reductase component of the nitrogenase enzyme complex. The ADP-ribosyltransferase (DraT) transfers the ADP-ribose group from NAD to dinitrogenase reductase. The ADP-ribose group is removed through the action of the ADP-ribosylglycohydrolase (DraG, this entry). The protein is ADP-ribosyl-[dinitrogen reductase] glycohydrolase of Rhodospirillum rubrum.